The chain runs to 359 residues: Histidinol-phosphate aminotransferase (359 aa).

Lys-217 carries the post-translational modification N6-(pyridoxal phosphate)lysine.

Belongs to the class-II pyridoxal-phosphate-dependent aminotransferase family. Histidinol-phosphate aminotransferase subfamily. Homodimer. Pyridoxal 5'-phosphate serves as cofactor.

It catalyses the reaction L-histidinol phosphate + 2-oxoglutarate = 3-(imidazol-4-yl)-2-oxopropyl phosphate + L-glutamate. The protein operates within amino-acid biosynthesis; L-histidine biosynthesis; L-histidine from 5-phospho-alpha-D-ribose 1-diphosphate: step 7/9. The chain is Histidinol-phosphate aminotransferase from Roseobacter denitrificans (strain ATCC 33942 / OCh 114) (Erythrobacter sp. (strain OCh 114)).